The chain runs to 196 residues: uncharacterized protein (196 aa).

The segment at 44 to 80 (RSVAVPGTEGKKAQNLRQLPAARLTYPTSSSTRPSHA) is disordered.

This is an uncharacterized protein from Treponema pallidum (strain Nichols).